A 396-amino-acid chain; its full sequence is MSSKKGSKTSKTSRSVKQTEEYYDDDAEFQNSEDEYPPSDEDLDNSGGSDDENTQSGGLSDAPDDELGEDSATLDIDPDDEAEYDTDGDEKFNPIDEMGEPEDPDDPSEQEEDEVEDLGSEDVDNVEIEDDAADIEDLDPELVDEARNSKSKQCYMKNLNKDFIALDEDDSGIYSKIEYKKIPDNERETDPILTYYEIVRILGTRAQQFNYGAKPLIKGVEGMHPAKMAFVELTAKMTSFIVRRHLPGKKYEDWRIDELGMIHTITEELFVPDNFNWDSITALHKTMISNQQKNSTTDTETLSTQENASTRVSGSNLRSRSGSKSSKSNNSRSASKSNSRTESKSNSRTGSKSNSRTGSKSNSRTGSKSKKSSNTKSKSKRNSDNSDDSDYSDYSE.

Disordered stretches follow at residues 1-137 and 290-396; these read MSSK…DIED and NQQK…DYSE. Composition is skewed to acidic residues over residues 21 to 53, 76 to 88, and 97 to 137; these read EYYD…DDEN, IDPD…DTDG, and EMGE…DIED. A compositionally biased stretch (polar residues) spans 290 to 312; it reads NQQKNSTTDTETLSTQENASTRV. 2 stretches are compositionally biased toward low complexity: residues 313 to 338 and 346 to 366; these read SGSN…SKSN and NSRT…SRTG. The span at 367–380 shows a compositional bias: basic residues; it reads SKSKKSSNTKSKSK. A compositionally biased stretch (acidic residues) spans 385-396; sequence NSDDSDYSDYSE.

The protein belongs to the archaeal Rpo6/eukaryotic RPB6 RNA polymerase subunit family.

The catalysed reaction is RNA(n) + a ribonucleoside 5'-triphosphate = RNA(n+1) + diphosphate. In terms of biological role, DNA-dependent RNA polymerase catalyzes the transcription of DNA into RNA using the four ribonucleoside triphosphates as substrates. The chain is DNA-directed RNA polymerase subunit 6 from Acanthamoeba polyphaga (Amoeba).